A 193-amino-acid chain; its full sequence is dTTP/UTP pyrophosphatase (193 aa).

Residue D68 is the Proton acceptor of the active site.

It belongs to the Maf family. YhdE subfamily. A divalent metal cation is required as a cofactor.

It is found in the cytoplasm. The catalysed reaction is dTTP + H2O = dTMP + diphosphate + H(+). It carries out the reaction UTP + H2O = UMP + diphosphate + H(+). Functionally, nucleoside triphosphate pyrophosphatase that hydrolyzes dTTP and UTP. May have a dual role in cell division arrest and in preventing the incorporation of modified nucleotides into cellular nucleic acids. This Ruegeria sp. (strain TM1040) (Silicibacter sp.) protein is dTTP/UTP pyrophosphatase.